A 419-amino-acid polypeptide reads, in one-letter code: MTTQLEQAWELAKQRFAAVGIDVEEALRQLDRLPVSMHCWQGDDVSGFENPEGSLTGGIQATGNYPGKARNASELRADLEQAMRLIPGPKRLNLHAIYLESDTPVSRDQIKPEHFKNWVEWAKANQLGLDFNPSCFSHPLSADGFTLSHADDSIRQFWIDHCKASRRVSAYFGEQLGTPSVMNIWIPDGMKDITVDRLAPRQRLLAALDEVISEKLDPAHHIDAVESKLFGIGAESYTVGSNEFYMGYATSRQTALCLDAGHFHPTEVISDKISAAMLYVPQLLLHVSRPVRWDSDHVVLLDDETQAIASEIVRHDLFDRVHIGLDFFDASINRIAAWVIGTRNMKKALLRALLEPTTELRKLEAAGDYTARLALLEEQKSLPWQAVWEMYCQRHDTPVGSEWLESVRAYEKAILSQRG.

Mn(2+) contacts are provided by His-262, Asp-294, and Asp-296.

This sequence belongs to the rhamnose isomerase family. Homotetramer. Requires Mn(2+) as cofactor.

It localises to the cytoplasm. The enzyme catalyses L-rhamnopyranose = L-rhamnulose. It functions in the pathway carbohydrate degradation; L-rhamnose degradation; glycerone phosphate from L-rhamnose: step 1/3. Functionally, catalyzes the interconversion of L-rhamnose and L-rhamnulose. This is L-rhamnose isomerase from Escherichia coli (strain SMS-3-5 / SECEC).